The sequence spans 128 residues: UPF0325 protein KPN78578_01770 (128 aa).

It belongs to the UPF0325 family.

The sequence is that of UPF0325 protein KPN78578_01770 from Klebsiella pneumoniae subsp. pneumoniae (strain ATCC 700721 / MGH 78578).